A 234-amino-acid chain; its full sequence is Proteasome subunit alpha type-2 (234 aa).

A2 carries the N-acetylalanine modification. Y121 bears the Phosphotyrosine mark.

It belongs to the peptidase T1A family. As to quaternary structure, the 26S proteasome consists of a 20S proteasome core and two 19S regulatory subunits. The 20S proteasome core is composed of 28 subunits that are arranged in four stacked rings, resulting in a barrel-shaped structure. The two end rings are each formed by seven alpha subunits, and the two central rings are each formed by seven beta subunits. The catalytic chamber with the active sites is on the inside of the barrel.

It localises to the cytoplasm. The protein localises to the nucleus. Functionally, the proteasome is a multicatalytic proteinase complex which is characterized by its ability to cleave peptides with Arg, Phe, Tyr, Leu, and Glu adjacent to the leaving group at neutral or slightly basic pH. The proteasome has an ATP-dependent proteolytic activity. PSMA2 may have a potential regulatory effect on another component(s) of the proteasome complex through tyrosine phosphorylation. This chain is Proteasome subunit alpha type-2 (psma2), found in Carassius auratus (Goldfish).